A 341-amino-acid polypeptide reads, in one-letter code: L-threonine 3-dehydrogenase (341 aa).

C38 contacts Zn(2+). Catalysis depends on charge relay system residues T40 and H43. Zn(2+) contacts are provided by H63, E64, C93, C96, C99, and C107. NAD(+) contacts are provided by residues I175, D195, R200, 262-264 (LGI), and 286-287 (IY).

The protein belongs to the zinc-containing alcohol dehydrogenase family. As to quaternary structure, homotetramer. Zn(2+) is required as a cofactor.

It localises to the cytoplasm. It catalyses the reaction L-threonine + NAD(+) = (2S)-2-amino-3-oxobutanoate + NADH + H(+). It functions in the pathway amino-acid degradation; L-threonine degradation via oxydo-reductase pathway; glycine from L-threonine: step 1/2. Its function is as follows. Catalyzes the NAD(+)-dependent oxidation of L-threonine to 2-amino-3-ketobutyrate. In Yersinia enterocolitica serotype O:8 / biotype 1B (strain NCTC 13174 / 8081), this protein is L-threonine 3-dehydrogenase.